Here is a 186-residue protein sequence, read N- to C-terminus: Potassium-transporting ATPase KdpC subunit (186 aa).

A helical transmembrane segment spans residues 9-29; that stretch reads AAVVLFGGCLLVLGLLYPLAM.

Belongs to the KdpC family. The system is composed of three essential subunits: KdpA, KdpB and KdpC.

Its subcellular location is the cell membrane. Its function is as follows. Part of the high-affinity ATP-driven potassium transport (or Kdp) system, which catalyzes the hydrolysis of ATP coupled with the electrogenic transport of potassium into the cytoplasm. This subunit acts as a catalytic chaperone that increases the ATP-binding affinity of the ATP-hydrolyzing subunit KdpB by the formation of a transient KdpB/KdpC/ATP ternary complex. The chain is Potassium-transporting ATPase KdpC subunit from Methanosphaerula palustris (strain ATCC BAA-1556 / DSM 19958 / E1-9c).